The following is a 138-amino-acid chain: ATP synthase epsilon chain (138 aa).

The protein belongs to the ATPase epsilon chain family. F-type ATPases have 2 components, CF(1) - the catalytic core - and CF(0) - the membrane proton channel. CF(1) has five subunits: alpha(3), beta(3), gamma(1), delta(1), epsilon(1). CF(0) has three main subunits: a, b and c.

It is found in the cell inner membrane. In terms of biological role, produces ATP from ADP in the presence of a proton gradient across the membrane. The polypeptide is ATP synthase epsilon chain (Methylibium petroleiphilum (strain ATCC BAA-1232 / LMG 22953 / PM1)).